A 689-amino-acid chain; its full sequence is DNA topoisomerase 1 (689 aa).

The region spanning 3 to 113 (DNLVIVESPA…KENRVVFNEI (111 aa)) is the Toprim domain. Residues glutamate 9 and aspartate 82 each contribute to the Mg(2+) site. Residues 129-557 (EMNLVDAQQA…FFSSFKQDVE (429 aa)) form the Topo IA-type catalytic domain. The segment at 163–168 (SAGRVQ) is interaction with DNA. Residue tyrosine 298 is the O-(5'-phospho-DNA)-tyrosine intermediate of the active site. Residues 328–356 (SKRKASGKQGDQDAHEAIRPSSTMRTPDD) form a disordered region. 3 C4-type zinc fingers span residues 577 to 603 (CEIC…FPDC), 617 to 645 (CPKC…YPEC), and 658 to 681 (CPKC…CSNC).

This sequence belongs to the type IA topoisomerase family. As to quaternary structure, monomer. Requires Mg(2+) as cofactor.

The enzyme catalyses ATP-independent breakage of single-stranded DNA, followed by passage and rejoining.. In terms of biological role, releases the supercoiling and torsional tension of DNA, which is introduced during the DNA replication and transcription, by transiently cleaving and rejoining one strand of the DNA duplex. Introduces a single-strand break via transesterification at a target site in duplex DNA. The scissile phosphodiester is attacked by the catalytic tyrosine of the enzyme, resulting in the formation of a DNA-(5'-phosphotyrosyl)-enzyme intermediate and the expulsion of a 3'-OH DNA strand. The free DNA strand then undergoes passage around the unbroken strand, thus removing DNA supercoils. Finally, in the religation step, the DNA 3'-OH attacks the covalent intermediate to expel the active-site tyrosine and restore the DNA phosphodiester backbone. The sequence is that of DNA topoisomerase 1 from Staphylococcus aureus (strain USA300).